The chain runs to 77 residues: Acyl carrier protein (77 aa).

Residues 2–77 (SDIAARVKKI…DATKFISEAQ (76 aa)) form the Carrier domain. The residue at position 37 (S37) is an O-(pantetheine 4'-phosphoryl)serine.

Belongs to the acyl carrier protein (ACP) family. In terms of processing, 4'-phosphopantetheine is transferred from CoA to a specific serine of apo-ACP by AcpS. This modification is essential for activity because fatty acids are bound in thioester linkage to the sulfhydryl of the prosthetic group.

It is found in the cytoplasm. Its pathway is lipid metabolism; fatty acid biosynthesis. In terms of biological role, carrier of the growing fatty acid chain in fatty acid biosynthesis. The polypeptide is Acyl carrier protein (Jannaschia sp. (strain CCS1)).